A 64-amino-acid polypeptide reads, in one-letter code: MAGGHVAHLVYKGPSVVKELVIGFSLGLVAGGFWKMHHWNSQRRTKEFYDMLEKGQISVVADEE.

Residues 16–34 traverse the membrane as a helical segment; it reads VVKELVIGFSLGLVAGGFW.

This sequence belongs to the cytochrome c oxidase subunit 5C family. Sweet potato cytochrome C oxidase consists of at least seven different polypeptides species, subunits I, II, III, IV, Va, Vb, and Vc in order of MW.

Its subcellular location is the mitochondrion inner membrane. This protein is one of the nuclear-coded polypeptide chains of cytochrome c oxidase, the terminal oxidase in mitochondrial electron transport. This Ipomoea batatas (Sweet potato) protein is Cytochrome c oxidase subunit 5C (COX5C).